A 278-amino-acid chain; its full sequence is 3-methyl-2-oxobutanoate hydroxymethyltransferase (278 aa).

The Mg(2+) site is built by Asp-43 and Asp-82. 3-methyl-2-oxobutanoate-binding positions include 43 to 44, Asp-82, and Lys-112; that span reads DS. Residue Glu-114 coordinates Mg(2+). The Proton acceptor role is filled by Glu-181.

The protein belongs to the PanB family. Homodecamer; pentamer of dimers. Mg(2+) is required as a cofactor.

It is found in the cytoplasm. It carries out the reaction 3-methyl-2-oxobutanoate + (6R)-5,10-methylene-5,6,7,8-tetrahydrofolate + H2O = 2-dehydropantoate + (6S)-5,6,7,8-tetrahydrofolate. It functions in the pathway cofactor biosynthesis; (R)-pantothenate biosynthesis; (R)-pantoate from 3-methyl-2-oxobutanoate: step 1/2. Its function is as follows. Catalyzes the reversible reaction in which hydroxymethyl group from 5,10-methylenetetrahydrofolate is transferred onto alpha-ketoisovalerate to form ketopantoate. In Bacillus cereus (strain ATCC 10987 / NRS 248), this protein is 3-methyl-2-oxobutanoate hydroxymethyltransferase.